The sequence spans 459 residues: DNA primase large subunit (459 aa).

Residues Cys-291, Cys-369, Cys-386, and Cys-428 each coordinate [4Fe-4S] cluster.

This sequence belongs to the eukaryotic-type primase large subunit family. In terms of assembly, heterodimer of a catalytic subunit spp1/pri1 and a regulatory subunit spp2/pri2, also known as the DNA primase complex. Component of the alpha DNA polymerase complex (also known as the alpha DNA polymerase-primase complex) consisting of four subunits: the catalytic subunit pol1, the accessory subunit spb70/pol12, and the primase complex subunits spp1/pri1 and spp2/pri2 respectively. Interacts with orc2; preferentially associates with the unphosphorylated orc2 in G1 pre-Start prior to orc2 being phosphorylated by cdc2, the interaction is mediated by spb70 and might enable the association of the whole alpha DNA polymerase complex to orc2/spb70 complex on chromatin. Requires [4Fe-4S] cluster as cofactor.

The protein localises to the nucleus. Its subcellular location is the chromosome. In terms of biological role, regulatory subunit of the DNA primase complex and component of the DNA polymerase alpha complex (also known as the alpha DNA polymerase-primase complex - primosome/replisome) which play an essential role in the initiation of DNA synthesis. During the S phase of the cell cycle, the DNA polymerase alpha complex (composed of a catalytic subunit pol1, an accessory subunit spb70/pol12 and two primase subunits, the catalytic subunit spp1/pri1 and the regulatory subunit spp2/pri2) is recruited to DNA at the replicative forks. The primase subunit of the polymerase alpha complex initiates DNA synthesis by oligomerising short RNA primers on both leading and lagging strands. This chain is DNA primase large subunit, found in Schizosaccharomyces pombe (strain 972 / ATCC 24843) (Fission yeast).